We begin with the raw amino-acid sequence, 1057 residues long: Carbamoyl phosphate synthase large chain (1057 aa).

A carboxyphosphate synthetic domain region spans residues M1–E401. 12 residues coordinate ATP: R129, R169, G175, G176, K208, I210, E215, G241, I242, H243, Q284, and E298. In terms of domain architecture, ATP-grasp 1 spans R133 to V327. Residues Q284, E298, and N300 each coordinate Mg(2+). Mn(2+) is bound by residues Q284, E298, and N300. An oligomerization domain region spans residues Y402–S546. The interval I547–G929 is carbamoyl phosphate synthetic domain. An ATP-grasp 2 domain is found at E671 to I861. Residues R707, R746, L748, E752, G777, V778, H779, S780, Q820, and E832 each contribute to the ATP site. The Mg(2+) site is built by Q820, E832, and N834. Residues Q820, E832, and N834 each coordinate Mn(2+). The 128-residue stretch at V930–M1057 folds into the MGS-like domain. The tract at residues V930 to M1057 is allosteric domain.

Belongs to the CarB family. Composed of two chains; the small (or glutamine) chain promotes the hydrolysis of glutamine to ammonia, which is used by the large (or ammonia) chain to synthesize carbamoyl phosphate. Tetramer of heterodimers (alpha,beta)4. Mg(2+) serves as cofactor. It depends on Mn(2+) as a cofactor.

It carries out the reaction hydrogencarbonate + L-glutamine + 2 ATP + H2O = carbamoyl phosphate + L-glutamate + 2 ADP + phosphate + 2 H(+). The catalysed reaction is hydrogencarbonate + NH4(+) + 2 ATP = carbamoyl phosphate + 2 ADP + phosphate + 2 H(+). Its pathway is amino-acid biosynthesis; L-arginine biosynthesis; carbamoyl phosphate from bicarbonate: step 1/1. The protein operates within pyrimidine metabolism; UMP biosynthesis via de novo pathway; (S)-dihydroorotate from bicarbonate: step 1/3. Its function is as follows. Large subunit of the glutamine-dependent carbamoyl phosphate synthetase (CPSase). CPSase catalyzes the formation of carbamoyl phosphate from the ammonia moiety of glutamine, carbonate, and phosphate donated by ATP, constituting the first step of 2 biosynthetic pathways, one leading to arginine and/or urea and the other to pyrimidine nucleotides. The large subunit (synthetase) binds the substrates ammonia (free or transferred from glutamine from the small subunit), hydrogencarbonate and ATP and carries out an ATP-coupled ligase reaction, activating hydrogencarbonate by forming carboxy phosphate which reacts with ammonia to form carbamoyl phosphate. The protein is Carbamoyl phosphate synthase large chain of Staphylococcus aureus (strain Mu3 / ATCC 700698).